Reading from the N-terminus, the 222-residue chain is Small ribosomal subunit protein uS3 (222 aa).

The region spanning 38–106 is the KH type-2 domain; it reads IRKFISEKLA…NVHINIVEIK (69 aa).

The protein belongs to the universal ribosomal protein uS3 family. In terms of assembly, part of the 30S ribosomal subunit. Forms a tight complex with proteins S10 and S14.

Its function is as follows. Binds the lower part of the 30S subunit head. Binds mRNA in the 70S ribosome, positioning it for translation. In Lactobacillus gasseri (strain ATCC 33323 / DSM 20243 / BCRC 14619 / CIP 102991 / JCM 1131 / KCTC 3163 / NCIMB 11718 / NCTC 13722 / AM63), this protein is Small ribosomal subunit protein uS3.